Reading from the N-terminus, the 268-residue chain is Tryptophan synthase alpha chain (268 aa).

Catalysis depends on proton acceptor residues glutamate 49 and aspartate 60.

It belongs to the TrpA family. Tetramer of two alpha and two beta chains.

It carries out the reaction (1S,2R)-1-C-(indol-3-yl)glycerol 3-phosphate + L-serine = D-glyceraldehyde 3-phosphate + L-tryptophan + H2O. Its pathway is amino-acid biosynthesis; L-tryptophan biosynthesis; L-tryptophan from chorismate: step 5/5. Its function is as follows. The alpha subunit is responsible for the aldol cleavage of indoleglycerol phosphate to indole and glyceraldehyde 3-phosphate. The polypeptide is Tryptophan synthase alpha chain (Escherichia coli (strain 55989 / EAEC)).